Here is a 228-residue protein sequence, read N- to C-terminus: Delta-type opioid receptor (228 aa).

Residues 1–3 form a helical membrane-spanning segment; the sequence is GIV. Residues 4–13 lie on the Cytoplasmic side of the membrane; that stretch reads RYTKMKTATN. Residues 14–38 traverse the membrane as a helical segment; the sequence is IYIFNLALADALATSTLPFQSAKYL. At 39–50 the chain is on the extracellular side; that stretch reads METWPFGELLCK. Cys-49 and Cys-126 are joined by a disulfide. Residues 51–72 traverse the membrane as a helical segment; it reads AVLSIDYYNMFTSIFTLTMMSV. The Cytoplasmic portion of the chain corresponds to 73 to 91; that stretch reads DRYIAVCHPVKALDFRTPA. Residues 92–114 form a helical membrane-spanning segment; it reads KAKLINICIWVLASGVGVPIMVM. Topologically, residues 115 to 134 are extracellular; that stretch reads AVTRPRDGAVVCMLQFPSPS. The chain crosses the membrane as a helical span at residues 135-166; the sequence is WYWDTVTKICVFLFAFVVPILVITVCYGLMLL. The Cytoplasmic portion of the chain corresponds to 167–189; the sequence is RLRSVRLLSGSKEKDRSLRRITR. Residues 190-212 form a helical membrane-spanning segment; that stretch reads MVLVVVGAFVVCWAPIHIFVIVW. Over 213–227 the chain is Extracellular; it reads TLVDIDRRDPLVVAA.

It belongs to the G-protein coupled receptor 1 family. In terms of assembly, may form homooligomers. Forms a heterodimer with OPRM1. Interacts with GPRASP1. Interacts with RTP4; the interaction promotes cell surface localization of the OPRD1-OPRM1 heterodimer. In terms of processing, ubiquitinated. A basal ubiquitination seems not to be related to degradation. Ubiquitination is increased upon formation of OPRM1:OPRD1 oligomers leading to proteasomal degradation; the ubiquitination is diminished by RTP4. In terms of tissue distribution, detected in myenteric plexus and smooth muscle (at protein level). Detected in brain and intestine.

The protein resides in the cell membrane. G-protein coupled receptor that functions as a receptor for endogenous enkephalins and for a subset of other opioids. Ligand binding causes a conformation change that triggers signaling via guanine nucleotide-binding proteins (G proteins) and modulates the activity of down-stream effectors, such as adenylate cyclase. Signaling leads to the inhibition of adenylate cyclase activity. Inhibits neurotransmitter release by reducing calcium ion currents and increasing potassium ion conductance. Plays a role in the perception of pain and in opiate-mediated analgesia. Plays a role in developing analgesic tolerance to morphine. This is Delta-type opioid receptor (OPRD1) from Sus scrofa (Pig).